A 175-amino-acid polypeptide reads, in one-letter code: ATP synthase subunit b, chloroplastic (175 aa).

Residues 22–42 (VFETNIINLAAVVGIVVSFVG) form a helical membrane-spanning segment.

This sequence belongs to the ATPase B chain family. In terms of assembly, F-type ATPases have 2 components, F(1) - the catalytic core - and F(0) - the membrane proton channel. F(1) has five subunits: alpha(3), beta(3), gamma(1), delta(1), epsilon(1). F(0) has four main subunits: a(1), b(1), b'(1) and c(10-14). The alpha and beta chains form an alternating ring which encloses part of the gamma chain. F(1) is attached to F(0) by a central stalk formed by the gamma and epsilon chains, while a peripheral stalk is formed by the delta, b and b' chains.

It is found in the plastid. It localises to the chloroplast thylakoid membrane. Its function is as follows. F(1)F(0) ATP synthase produces ATP from ADP in the presence of a proton or sodium gradient. F-type ATPases consist of two structural domains, F(1) containing the extramembraneous catalytic core and F(0) containing the membrane proton channel, linked together by a central stalk and a peripheral stalk. During catalysis, ATP synthesis in the catalytic domain of F(1) is coupled via a rotary mechanism of the central stalk subunits to proton translocation. In terms of biological role, component of the F(0) channel, it forms part of the peripheral stalk, linking F(1) to F(0). This Chlamydomonas reinhardtii (Chlamydomonas smithii) protein is ATP synthase subunit b, chloroplastic.